Reading from the N-terminus, the 489-residue chain is MGQINRKFSEKQFLLFVVNYIAGFGFIATAISLFRLGPFSWLIFLLVSLVSLIVTLSFARLSSIDSQNYGGPYLWAKKAVDKEKIAGRMFSFFTGWNNFIIGPLSAATAPLFILNSFSGIDGIRGNLVNTWILIAIGFSFYVLLAFISTKGTSLNKKLIALFASVKWIVILSALIVAIYVIARDGNGYSQNNNLESGFFGRREISFAQIATVFITFFYSYAGVEDISVMTPDVKTNNFRKILIVSFIAVFLFYFIGIIILNGLQNIAQRGGEANSIGNVADIFKKAAGLGTLIFYGVGALFNNVSTRLSTIIANSRKILPLAYDNYLPSFFYKQNKKGEFQNAIWFTFGTTLIAMTLLVFIPLVASNFDFDNATEYAASVGSAATLLQYIFVFFIIFKFIYKKEPLYQKKWVKTTEELLFCLGTIVIVLMLLVYLFPVIDGFSKWETKHTLTIVLYGVLSLIGLVLFLLQEYKHKNKQNANKQTTQTTV.

12 helical membrane passes run 14-34 (LLFVVNYIAGFGFIATAISLF), 36-56 (LGPFSWLIFLLVSLVSLIVTL), 100-120 (IIGPLSAATAPLFILNSFSGI), 127-147 (LVNTWILIAIGFSFYVLLAFI), 158-178 (LIALFASVKWIVILSALIVAI), 203-223 (EISFAQIATVFITFFYSYAGV), 241-261 (ILIVSFIAVFLFYFIGIIILN), 286-306 (AAGLGTLIFYGVGALFNNVST), 344-364 (IWFTFGTTLIAMTLLVFIPLV), 380-400 (VGSAATLLQYIFVFFIIFKFI), 419-439 (LFCLGTIVIVLMLLVYLFPVI), and 449-469 (HTLTIVLYGVLSLIGLVLFLL).

The protein to M.genitalium MG226.

It localises to the cell membrane. This is an uncharacterized protein from Mycoplasma genitalium (strain ATCC 33530 / DSM 19775 / NCTC 10195 / G37) (Mycoplasmoides genitalium).